Here is a 212-residue protein sequence, read N- to C-terminus: HTH-type transcriptional regulator RutR (212 aa).

Residues 17-77 (SAKKKAILSA…AVLRQILDIW (61 aa)) enclose the HTH tetR-type domain. The segment at residues 39–58 (TRLEQIAELAGVSKTNLLYY) is a DNA-binding region (H-T-H motif).

Homodimer.

In terms of biological role, master transcription regulator which represses the degradation of pyrimidines (rutABCDEFG) and purines (gcl operon) for maintenance of metabolic balance between pyrimidines and purines. It also regulates the synthesis of pyrimidine nucleotides and arginine from glutamine (carAB) and the supply of glutamate (gadABWX). This is HTH-type transcriptional regulator RutR (rutR) from Escherichia coli O6:H1 (strain CFT073 / ATCC 700928 / UPEC).